Reading from the N-terminus, the 582-residue chain is Aspartate--tRNA ligase (582 aa).

An L-aspartate-binding site is contributed by Glu174. Residues Gln198–Lys201 are aspartate. Arg220 contributes to the L-aspartate binding site. ATP-binding positions include Arg220–Glu222 and Gln229. His443 lines the L-aspartate pocket. Residue Glu477 participates in ATP binding. L-aspartate is bound at residue Arg484. Gly529–Arg532 contacts ATP.

This sequence belongs to the class-II aminoacyl-tRNA synthetase family. Type 1 subfamily. In terms of assembly, homodimer.

The protein localises to the cytoplasm. The catalysed reaction is tRNA(Asp) + L-aspartate + ATP = L-aspartyl-tRNA(Asp) + AMP + diphosphate. Functionally, catalyzes the attachment of L-aspartate to tRNA(Asp) in a two-step reaction: L-aspartate is first activated by ATP to form Asp-AMP and then transferred to the acceptor end of tRNA(Asp). The protein is Aspartate--tRNA ligase of Streptococcus pyogenes serotype M1.